The sequence spans 262 residues: Ribose-5-phosphate isomerase A (262 aa).

Residues 33–36, 89–92, and 102–105 each bind substrate; these read TGST, DGAD, and KGGG. Glutamate 111 functions as the Proton acceptor in the catalytic mechanism. Lysine 129 contributes to the substrate binding site.

Belongs to the ribose 5-phosphate isomerase family. As to quaternary structure, homodimer.

It catalyses the reaction aldehydo-D-ribose 5-phosphate = D-ribulose 5-phosphate. It functions in the pathway carbohydrate degradation; pentose phosphate pathway; D-ribose 5-phosphate from D-ribulose 5-phosphate (non-oxidative stage): step 1/1. Its function is as follows. Catalyzes the reversible conversion of ribose-5-phosphate to ribulose 5-phosphate. The chain is Ribose-5-phosphate isomerase A from Cereibacter sphaeroides (strain ATCC 17029 / ATH 2.4.9) (Rhodobacter sphaeroides).